A 141-amino-acid chain; its full sequence is Transcription antitermination protein NusB (141 aa).

The protein belongs to the NusB family.

In terms of biological role, involved in transcription antitermination. Required for transcription of ribosomal RNA (rRNA) genes. Binds specifically to the boxA antiterminator sequence of the ribosomal RNA (rrn) operons. The chain is Transcription antitermination protein NusB from Neisseria meningitidis serogroup A / serotype 4A (strain DSM 15465 / Z2491).